We begin with the raw amino-acid sequence, 593 residues long: MDKIRNFCIIAHIDHGKSTLADRLLEFTNTIQVTEGQMLDDMDLEKERGITIKSHAIQMEYTYKGEKYILNLIDTPGHVDFSYEVSRSIAACEGALLIVDASQGVQAQTISNLYMAIEHDLEIIPIINKCDMASAMPEEVEDEIVELLGCKRDEIIRASGKTGMGVEEILAAVIERIPHPQGDESAPLQALIFDSVFNSFRGIIAYFKITNGVIRAGDKVKFFNTGKEYVADEIGVLKMEMVPRKELRTGDVGYIISGIKTSKEVKVGDTITHVARPCDKAIAGFEEVKPMVFAGVYPIEAEEFEDLRASLEKLQLNDASLTFQPESSLALGFGFRCGFLGLLHMEIVQERLDREFDMNVITTVPNVSYHIYDKQGNMTEVHNPGGMPDPTMIDHIEEPYIKASIITTTDYIGPIMTLCLGKRGELLKQEYISGNRVELFYNMPLGEIVIDFYDRLKSISKGYASFDYHPDGFRPSKLVKLDILLNGESVDALSTLTHFDNAYDMGRRMCEKLKELIPRQQFEIAIQAAIGAKIIARETIKAVRKDVTAKCYGGDISRKRKLLEKQKKGKKRMKQIGNVEVPQKAFLAVLKLD.

Residues 2–181 form the tr-type G domain; it reads DKIRNFCIIA…AVIERIPHPQ (180 aa). GTP contacts are provided by residues 14–19 and 128–131; these read DHGKST and NKCD.

Belongs to the TRAFAC class translation factor GTPase superfamily. Classic translation factor GTPase family. LepA subfamily.

It is found in the cell inner membrane. The catalysed reaction is GTP + H2O = GDP + phosphate + H(+). In terms of biological role, required for accurate and efficient protein synthesis under certain stress conditions. May act as a fidelity factor of the translation reaction, by catalyzing a one-codon backward translocation of tRNAs on improperly translocated ribosomes. Back-translocation proceeds from a post-translocation (POST) complex to a pre-translocation (PRE) complex, thus giving elongation factor G a second chance to translocate the tRNAs correctly. Binds to ribosomes in a GTP-dependent manner. The chain is Elongation factor 4 from Bacteroides fragilis (strain ATCC 25285 / DSM 2151 / CCUG 4856 / JCM 11019 / LMG 10263 / NCTC 9343 / Onslow / VPI 2553 / EN-2).